A 439-amino-acid chain; its full sequence is MRNGMRKIIAGVFIFVFLISNLYADLVAEVTTGVIQKPLVTVVSDNVVDQFPQQVNSVIVADLNHNAKLQANDTIKYEIKQKQNIPWKSLKSDYVVLTKYTNNSYNNYTVEVQILKRNDTSYLQAITYKNINVSLMRTLAHKISNYVYQKLTGNQGFFLTKLAYVKVSNPYARYGRLYELIISDYDGYNKHVVLRQTDNPIATPSWSNDGRYIVYSSYSGGSMGVYTLEIATGKVTRITNYKGINSSPSFSPDGKEIALALSKGYSDQTNIYIMNLSTKALKRITINGINTAPKFSPNGQSIVFTSDREGRPNIYVASVNSKYPQSSILSTKIHQAYEPNYTPDGKNIVFMNQSSRTSGTQIADFNLANGSVTNITNGKADSSPTVSPYGDMVAYISTNTRGYSSLDMVSLDGDNHFNIETADNGNILIQSPSWSPKNF.

A signal peptide spans 1 to 24 (MRNGMRKIIAGVFIFVFLISNLYA).

Belongs to the TolB family. In terms of assembly, the Tol-Pal system is composed of five core proteins: the inner membrane proteins TolA, TolQ and TolR, the periplasmic protein TolB and the outer membrane protein Pal. They form a network linking the inner and outer membranes and the peptidoglycan layer.

The protein localises to the periplasm. In terms of biological role, part of the Tol-Pal system, which plays a role in outer membrane invagination during cell division and is important for maintaining outer membrane integrity. This chain is Tol-Pal system protein TolB, found in Francisella tularensis subsp. tularensis (strain FSC 198).